Here is a 159-residue protein sequence, read N- to C-terminus: SsrA-binding protein (159 aa).

The protein belongs to the SmpB family.

The protein resides in the cytoplasm. In terms of biological role, required for rescue of stalled ribosomes mediated by trans-translation. Binds to transfer-messenger RNA (tmRNA), required for stable association of tmRNA with ribosomes. tmRNA and SmpB together mimic tRNA shape, replacing the anticodon stem-loop with SmpB. tmRNA is encoded by the ssrA gene; the 2 termini fold to resemble tRNA(Ala) and it encodes a 'tag peptide', a short internal open reading frame. During trans-translation Ala-aminoacylated tmRNA acts like a tRNA, entering the A-site of stalled ribosomes, displacing the stalled mRNA. The ribosome then switches to translate the ORF on the tmRNA; the nascent peptide is terminated with the 'tag peptide' encoded by the tmRNA and targeted for degradation. The ribosome is freed to recommence translation, which seems to be the essential function of trans-translation. In Coxiella burnetii (strain RSA 493 / Nine Mile phase I), this protein is SsrA-binding protein.